The chain runs to 35 residues: Photosystem II reaction center protein Psb30 (35 aa).

The helical transmembrane segment at 7–27 (VFVQLLLLALIVLAGPAVILL) threads the bilayer.

This sequence belongs to the Psb30/Ycf12 family. PSII is composed of 1 copy each of membrane proteins PsbA, PsbB, PsbC, PsbD, PsbE, PsbF, PsbH, PsbI, PsbJ, PsbK, PsbL, PsbM, PsbT, PsbX, PsbY, PsbZ, Psb30/Ycf12, peripheral proteins PsbO, CyanoQ (PsbQ), PsbU, PsbV and a large number of cofactors. It forms dimeric complexes.

Its subcellular location is the cellular thylakoid membrane. Its function is as follows. A core subunit of photosystem II (PSII), probably helps stabilize the reaction center. This chain is Photosystem II reaction center protein Psb30, found in Synechococcus sp. (strain JA-3-3Ab) (Cyanobacteria bacterium Yellowstone A-Prime).